We begin with the raw amino-acid sequence, 505 residues long: Methylmalonyl-CoA carboxyltransferase 5S subunit (505 aa).

The 263-residue stretch at 14–276 (VGITELVLRD…TTNLDYDRLH (263 aa)) folds into the Pyruvate carboxyltransferase domain. Substrate is bound by residues 22–26 (RDAHQ), alanine 59, and lysine 184. Aspartate 23 is a binding site for Co(2+). Residues lysine 184, histidine 215, and histidine 217 each coordinate Co(2+). Lysine 184 is modified (N6-carboxylysine; partial).

As to quaternary structure, homodimer. Transcarboxylase is composed of three subunits: 1.3S, 5S, and 12S. The core of the enzyme is composed of six 12S subunits. On each side of the core there are three pairs of 5S subunits. Each 5S dimer is attached to the core by two 1.3S subunits. Thus the total number of chains is 30 (6 + 12 + 12). Requires Co(2+) as cofactor. In terms of processing, lys-184 is carboxylated in the free enzyme and helps to coordinate the cobalt ion. Lys-184 is partially carboxylated in the complex with pyruvate, but is not carboxylated in the oxaloacetate-bound form.

It carries out the reaction (S)-methylmalonyl-CoA + pyruvate = propanoyl-CoA + oxaloacetate. In terms of biological role, the 5S subunit specifically catalyzes the transfer of the carboxyl group from biotin of the 1.3S subunit to pyruvate to form oxaloacetate and 1.3S biotin. The chain is Methylmalonyl-CoA carboxyltransferase 5S subunit from Propionibacterium freudenreichii subsp. shermanii.